We begin with the raw amino-acid sequence, 296 residues long: 4-hydroxy-tetrahydrodipicolinate synthase (296 aa).

Thr49 serves as a coordination point for pyruvate. The active-site Proton donor/acceptor is Tyr137. Lys166 acts as the Schiff-base intermediate with substrate in catalysis. Ile208 serves as a coordination point for pyruvate.

This sequence belongs to the DapA family. As to quaternary structure, homotetramer; dimer of dimers.

It is found in the cytoplasm. It carries out the reaction L-aspartate 4-semialdehyde + pyruvate = (2S,4S)-4-hydroxy-2,3,4,5-tetrahydrodipicolinate + H2O + H(+). It functions in the pathway amino-acid biosynthesis; L-lysine biosynthesis via DAP pathway; (S)-tetrahydrodipicolinate from L-aspartate: step 3/4. Its function is as follows. Catalyzes the condensation of (S)-aspartate-beta-semialdehyde [(S)-ASA] and pyruvate to 4-hydroxy-tetrahydrodipicolinate (HTPA). The polypeptide is 4-hydroxy-tetrahydrodipicolinate synthase (Chlorobium phaeovibrioides (strain DSM 265 / 1930) (Prosthecochloris vibrioformis (strain DSM 265))).